Reading from the N-terminus, the 313-residue chain is Ribosomal protein L11 methyltransferase (313 aa).

T154, G179, D201, and N242 together coordinate S-adenosyl-L-methionine.

This sequence belongs to the methyltransferase superfamily. PrmA family.

It localises to the cytoplasm. It catalyses the reaction L-lysyl-[protein] + 3 S-adenosyl-L-methionine = N(6),N(6),N(6)-trimethyl-L-lysyl-[protein] + 3 S-adenosyl-L-homocysteine + 3 H(+). Functionally, methylates ribosomal protein L11. This Xanthomonas oryzae pv. oryzae (strain MAFF 311018) protein is Ribosomal protein L11 methyltransferase.